A 330-amino-acid polypeptide reads, in one-letter code: Phosphate acyltransferase (330 aa).

The protein belongs to the PlsX family. As to quaternary structure, homodimer. Probably interacts with PlsY.

It localises to the cytoplasm. The enzyme catalyses a fatty acyl-[ACP] + phosphate = an acyl phosphate + holo-[ACP]. Its pathway is lipid metabolism; phospholipid metabolism. Functionally, catalyzes the reversible formation of acyl-phosphate (acyl-PO(4)) from acyl-[acyl-carrier-protein] (acyl-ACP). This enzyme utilizes acyl-ACP as fatty acyl donor, but not acyl-CoA. In Bacillus cereus (strain ATCC 14579 / DSM 31 / CCUG 7414 / JCM 2152 / NBRC 15305 / NCIMB 9373 / NCTC 2599 / NRRL B-3711), this protein is Phosphate acyltransferase.